We begin with the raw amino-acid sequence, 253 residues long: Low affinity immunoglobulin gamma Fc region receptor III-B (253 aa).

The first 20 residues, 1-20 (MGQPLPPVALLLLVSASSRA), serve as a signal peptide directing secretion. Residues 21 to 207 (ADVPKALVLL…VSSSVLPWHQ (187 aa)) lie on the Extracellular side of the membrane. 2 Ig-like C2-type domains span residues 24 to 105 (PKAL…LRVH) and 120 to 189 (EGEP…VTIT). Disulfide bonds link Cys-47-Cys-89 and Cys-128-Cys-172. 4 N-linked (GlcNAc...) asparagine glycosylation sites follow: Asn-56, Asn-63, Asn-165, and Asn-180. The helical transmembrane segment at 208–226 (IAFCLVMGLLLAADTGLYF) threads the bilayer. Residues 227–253 (SVQRDLRSSQRARKEHTLGWSLGSQDK) lie on the Cytoplasmic side of the membrane.

In terms of assembly, forms a heterooligomeric complex with ITAM-containing signaling subunits FCER1G. Interacts (via transmembrane domain) with signaling subunits; this interaction is a prerequisite for receptor complex expression on the cell surface and intracellular signal transduction. Binds the Fc region of antigen-complexed IgG.

The protein resides in the cell membrane. In terms of biological role, receptor for the invariable Fc fragment of immunoglobulin gamma (IgG). Optimally activated upon binding of clustered antigen-IgG complexes displayed on cell surfaces, triggers lysis of antibody-coated cells, a process known as antibody-dependent cellular cytotoxicity (ADCC). Does not bind free monomeric IgG, thus avoiding inappropriate effector cell activation in the absence of antigenic trigger. Mediates IgG effector functions on natural killer (NK) cells. Binds antigen-IgG complexes generated upon infection and triggers NK cell-dependent cytokine production and degranulation to limit viral load and propagation. Fc-binding subunit that associates with FCER1G adapters to form functional signaling complexes. Following the engagement of antigen-IgG complexes, triggers phosphorylation of immunoreceptor tyrosine-based activation motif (ITAM)-containing adapters with subsequent activation of phosphatidylinositol 3-kinase signaling and sustained elevation of intracellular calcium that ultimately drive NK cell activation. Mediates enhanced ADCC in response to afucosylated IgGs. The sequence is that of Low affinity immunoglobulin gamma Fc region receptor III-B (FCGR3B) from Oryctolagus cuniculus (Rabbit).